A 195-amino-acid polypeptide reads, in one-letter code: Calcium channel flower (195 aa).

Helical transmembrane passes span 34–54 (LLGI…VISI), 66–88 (IIQM…VCIE), and 117–137 (IFMC…ATGV).

Belongs to the calcium channel flower family. As to quaternary structure, homomultimer. Associates with the dally/ magu complex.

Its subcellular location is the cell membrane. It localises to the cytoplasmic vesicle. The protein resides in the secretory vesicle. The protein localises to the synaptic vesicle membrane. It is found in the presynaptic cell membrane. Its subcellular location is the endosome. With respect to regulation, channel activity is inhibited by La(3+), which reduces Ca(2+) influx and thus inhibits it's function in promoting activity-dependent bulk endocytosis (ADBE) in response to high stimuli. Transmembrane protein which mediates synaptic endocytosis, fitness-based cell culling, neuronal culling, morphogen gradient scaling, and calcium transport. Regulates synaptic endocytosis and hence couples exo- with endocytosis. Controls two major modes of synaptic vesicle (SV) endocytosis in the synaptic boutons of neuromuscular junctions (NMJs); Ca(2+) channel-independent Clathrin-mediated endocytosis (CME) in response to mild stimulation, and Ca(2+) channel-dependent activity-dependent bulk endocytosis (ADBE) in response to strong stimulation. Functions in ADBE and subsequent SV reformation from bulk endosomes by initiating Ca(2+) channel-dependent phosphatidylinositol 4,5-bisphosphate (PtdIns(4,5)P2) compartmentalization in synaptic boutons. There it acts at the periactive zone to provide the low Ca(2+) levels required to initiate Calcineurin activation and upregulate PtdIns(4,5)P2. Conversely PtdIns(4,5)P2 enhances fwe Ca(2+) channel-activity, establishing a positive feedback loop that induces PtdIns(4,5)P2 microdomain at the periactive zone. These microdomains trigger bulk membrane invagination (i.e. ADBE) by triggering actin polymerization while also promoting localization of fwe to bulk endosomes, thereby removing the ADBE trigger to reduce endocytosis and prevent excess membrane uptake. PtdIns(4,5)P2 then promotes SV reformation from the bulk endosomes, to coordinate ADBE and subsequent SV reformation. Different combinations of the flower isoforms at the cell membrane are also required for the identification and elimination of suboptimal or supernumerary cells during development, regeneration, and adulthood. Required for the recognition and elimination of unfit cells in the developing wing during cell competition. In the developing pupal retina, mediates the elimination of unwanted postmitotic neurons, including supernumerary photoreceptor neurons that form at the periphery of the retina and are contained within incomplete ommatidia units. Also required for efficient elimination and replacement of old neurons by newly generated neurons during regeneration in the adult brain following mechanical injury. Downstream of the flower fitness fingerprints, cells identified as unwanted or unfit are eliminated via apoptosis through the expression of ahuizotl (azot). However, the cells marked for elimination by the flower isoforms only undergo apoptosis if additional thresholds are met; (1) their neighboring fit/healthy cells express different levels of the fwe isoforms, and (2) the levels of the protective signal SPARC expressed by the loser or unwanted cells are unable to inhibit caspase activation. These additional thresholds for flower-mediated apoptosis, allows useful cells to recover from transient and limited stress before they are unnecessarily eliminated. Functions with dally and magu in a mechanism of scaling, which utilises apoptosis to ensure that the dpp morphogen gradient, which mediates organ growth, remains proportional to the size of the growing wing. In this mechanism, fwe represses dally- and Magu-dependent activity in expanding the gradient, and dally/Magu inhibits fwe-dependent apoptosis to keep cell death rate low. When the levels of these different proteins are optimally regulated the gradient correctly scales with organ growth but when this fails, fwe-mediated apoptosis is activated to trim the developing tissue to match the correct size of the gradient. The protein is Calcium channel flower of Drosophila ananassae (Fruit fly).